A 532-amino-acid chain; its full sequence is Autophagy-related protein 21 (532 aa).

2 WD repeats span residues 265–310 and 321–360; these read AHDS…KPFN and HNIA…HESF. Positions 317–321 match the L/FRRG motif motif; it reads LRRGH. Residues 360–380 form a disordered region; that stretch reads FEYEEDPANESDPDDEDRSSE. Residues 361–378 show a composition bias toward acidic residues; it reads EYEEDPANESDPDDEDRS.

Belongs to the WD repeat PROPPIN family.

It localises to the cytoplasm. It is found in the membrane. The protein resides in the vacuole membrane. Required for cytoplasm to vacuole transport (Cvt) vesicles formation and mitophagy. Involved in binding of phosphatidylethanolamine to ATG8 and in recruitment of ATG8 and ATG5 to the pre-autophagosomal structure. Protects ATG8 from ARG4-mediated cleavage. In Debaryomyces hansenii (strain ATCC 36239 / CBS 767 / BCRC 21394 / JCM 1990 / NBRC 0083 / IGC 2968) (Yeast), this protein is Autophagy-related protein 21 (ATG21).